Consider the following 155-residue polypeptide: MTGTAISVCLLFLLSVCSACYISNCPIGGKRSIMDAPQRKCMSCGPGDRGRCFGPGICCGESFGCLMGSPESARCAEENYLLTPCQAGGRPCGSEGGLCASSGLCCDAESCTMDQSCLSEEEGDERGSLFDGSDSGDVILKLLRLAGLTSPHQTH.

An N-terminal signal peptide occupies residues 1–19 (MTGTAISVCLLFLLSVCSA). Cysteines 20 and 25 form a disulfide. At glycine 28 the chain carries Glycine amide. Cystine bridges form between cysteine 41–cysteine 85, cysteine 44–cysteine 58, cysteine 52–cysteine 75, cysteine 59–cysteine 65, cysteine 92–cysteine 105, cysteine 99–cysteine 117, and cysteine 106–cysteine 111.

The protein belongs to the vasopressin/oxytocin family. Seven disulfide bonds are present in neurophysin.

Isotocin causes contraction of smooth muscles. The polypeptide is Isotocin-neurophysin IT 1 (Takifugu rubripes (Japanese pufferfish)).